An 83-amino-acid polypeptide reads, in one-letter code: Cytochrome b559 subunit alpha (83 aa).

A helical membrane pass occupies residues Val21–Trp35. His23 contacts heme.

The protein belongs to the PsbE/PsbF family. In terms of assembly, heterodimer of an alpha subunit and a beta subunit. PSII is composed of 1 copy each of membrane proteins PsbA, PsbB, PsbC, PsbD, PsbE, PsbF, PsbH, PsbI, PsbJ, PsbK, PsbL, PsbM, PsbT, PsbX, PsbY, PsbZ, Psb30/Ycf12, at least 3 peripheral proteins of the oxygen-evolving complex and a large number of cofactors. It forms dimeric complexes. The cofactor is heme b.

The protein resides in the plastid. Its subcellular location is the chloroplast thylakoid membrane. This b-type cytochrome is tightly associated with the reaction center of photosystem II (PSII). PSII is a light-driven water:plastoquinone oxidoreductase that uses light energy to abstract electrons from H(2)O, generating O(2) and a proton gradient subsequently used for ATP formation. It consists of a core antenna complex that captures photons, and an electron transfer chain that converts photonic excitation into a charge separation. The sequence is that of Cytochrome b559 subunit alpha from Liriodendron tulipifera (Tuliptree).